The following is a 359-amino-acid chain: MNSSSSEVQVCVTGGAGFIGSYLVKKLLEKGYTVHATLRNTGEDRAAAAAGPRRGGASAVVPLFEADLFDAATFAPAIAGCQFVFLVATPYGLEAAGSKYKSTAEAAVAAVRVILRQCEESKTVKRVIHTASISTASPLKDKEAEGSGDGYKDFISESCWTPLNVDYHLRSAHFDKYILAKLRSEQELLSYNGGESPAFEVVTLPLGLVAGDTVLGHAPETLEHAVSPVSREELSFKFLRLLQSLLGSEPLVHVDDACEALLFCMERPSIAGRFFCAAAYPSIHDITDHYASKFPHLDVLRATEAVAVAVQPEVDRLGELGFRYKYGMEEILDSSVACAARLGSLDAAKLNVPDTVSSK.

Residues arginine 39, 67–68 (DL), 87–89 (VAT), tyrosine 177, lysine 181, 206–209 (LGLV), and threonine 221 contribute to the NADP(+) site. The active-site Proton donor is the lysine 181.

The protein belongs to the NAD(P)-dependent epimerase/dehydratase family.

Functionally, in tandem with Hm1, NADPH-dependent HC toxin reductase (HCTR), which inactivates HC toxin, a cyclic tetrapeptide produced by the fungus Cochliobolus carbonum to permit infection and acting as an inhibitor of host histone deacetylases (HDACs), thus conferring resistance against C.carbonum race 1 in resistant cultivars (e.g. cv. B73 and cv. Wisconsin 22). Catalyzes the production of 8-hydroxy derivative of HC-toxin via the reduction of the 8-keto group of 2-amino-9,10-epoxy-8-oxo-decanoic acid, an amino acid of the HC-toxin. The protein is NADPH HC-toxin reductase 2 of Zea mays (Maize).